The following is a 501-amino-acid chain: Prostacyclin synthase (501 aa).

The chain crosses the membrane as a helical span at residues 1-21 (MSWAALLGLLAVLLLLLLLLS). Substrate contacts are provided by residues R107, L113, N288, 359–360 (TR), and R383. C442 is a binding site for heme.

The protein belongs to the cytochrome P450 family. Heme serves as cofactor.

It is found in the endoplasmic reticulum membrane. It carries out the reaction prostaglandin H2 = prostaglandin I2. It catalyses the reaction a hydroperoxyeicosatetraenoate = an oxoeicosatetraenoate + H2O. The enzyme catalyses (15S)-hydroperoxy-(5Z,8Z,11Z,13E)-eicosatetraenoate = 15-oxo-(5Z,8Z,11Z,13E)-eicosatetraenoate + H2O. The catalysed reaction is (15S)-hydroperoxy-(5Z,8Z,11Z,13E)-eicosatetraenoate + AH2 = (15S)-hydroxy-(5Z,8Z,11Z,13E)-eicosatetraenoate + A + H2O. Catalyzes the biosynthesis and metabolism of eicosanoids. Catalyzes the isomerization of prostaglandin H2 to prostacyclin (= prostaglandin I2), a potent mediator of vasodilation and inhibitor of platelet aggregation. Additionally, displays dehydratase activity, toward hydroperoxyeicosatetraenoates (HPETEs), especially toward (15S)-hydroperoxy-(5Z,8Z,11Z,13E)-eicosatetraenoate (15(S)-HPETE). In Rattus norvegicus (Rat), this protein is Prostacyclin synthase (Ptgis).